The following is a 320-amino-acid chain: Aspartate carbamoyltransferase catalytic subunit (320 aa).

Positions 68 and 69 each coordinate carbamoyl phosphate. Lys-96 is an L-aspartate binding site. Carbamoyl phosphate-binding residues include Arg-118, His-148, and Gln-151. L-aspartate-binding residues include Arg-181 and Arg-236. Residues Gly-277 and Pro-278 each contribute to the carbamoyl phosphate site.

The protein belongs to the aspartate/ornithine carbamoyltransferase superfamily. ATCase family. Heterododecamer (2C3:3R2) of six catalytic PyrB chains organized as two trimers (C3), and six regulatory PyrI chains organized as three dimers (R2).

The catalysed reaction is carbamoyl phosphate + L-aspartate = N-carbamoyl-L-aspartate + phosphate + H(+). Its pathway is pyrimidine metabolism; UMP biosynthesis via de novo pathway; (S)-dihydroorotate from bicarbonate: step 2/3. Functionally, catalyzes the condensation of carbamoyl phosphate and aspartate to form carbamoyl aspartate and inorganic phosphate, the committed step in the de novo pyrimidine nucleotide biosynthesis pathway. This Methylibium petroleiphilum (strain ATCC BAA-1232 / LMG 22953 / PM1) protein is Aspartate carbamoyltransferase catalytic subunit.